The primary structure comprises 203 residues: Outer-membrane lipoprotein LolB (203 aa).

The first 17 residues, 1–17 (MNRLFRLLPLASLVLTA), serve as a signal peptide directing secretion. A lipid anchor (N-palmitoyl cysteine) is attached at Cys-18. A lipid anchor (S-diacylglycerol cysteine) is attached at Cys-18.

Belongs to the LolB family. In terms of assembly, monomer.

It is found in the cell outer membrane. Functionally, plays a critical role in the incorporation of lipoproteins in the outer membrane after they are released by the LolA protein. The protein is Outer-membrane lipoprotein LolB of Klebsiella pneumoniae (strain 342).